A 711-amino-acid polypeptide reads, in one-letter code: Amyloid beta precursor protein binding family B member 1 (711 aa).

Ser-135 is subject to Phosphoserine. Disordered stretches follow at residues 140 to 257 (NTQG…SDLP), 277 to 300 (GTTQ…EESQ), and 321 to 364 (EPSE…QRNA). Residues 156-174 (EVEEEDEDEEEEDEEEEDL) are compositionally biased toward acidic residues. N6-acetyllysine is present on Lys-205. Over residues 224-235 (SWATLSQGSPSY) the composition is skewed to polar residues. The region spanning 254–286 (SDLPAGWMRVQDTSGTYYWHIPTGTTQWEPPGR) is the WW domain. Over residues 288–300 (SPSQGNSPQEESQ) the composition is skewed to polar residues. PID domains follow at residues 365-533 (NPGI…QVEF) and 538-700 (NELV…LWGS). Ser-460 carries the post-translational modification Phosphoserine; by PKC. Ser-518 carries the post-translational modification Phosphoserine. Position 548 is a phosphotyrosine; by ABL1 (Tyr-548). Ser-611 bears the Phosphoserine; by SGK1 mark. Lys-702 is modified (N6-acetyllysine).

As to quaternary structure, component of a complex, at least composed of APBB1, RASD1/DEXRAS1 and APP. Interacts (via PID domain 2) with APP (with the intracellular domain of the amyloid-beta precursor protein). Interacts (via PID domain 2) with RASD1/DEXRAS1; impairs the transcription activation activity. Interacts (via PID domain 1) with KAT5/TIP60. Interacts (via the WW domain) with the proline-rich region of APBB1IP. Interacts with TSHZ1 and TSHZ2. Interacts (via the WW domain) with histone H2AX (when phosphorylated on 'Tyr-142') and the proline-rich region of ENAH. Interacts with MAPK8. Interacts (via PID domain 1) with TSHZ3 (via homeobox domain). Interacts with SET. Found in a trimeric complex with HDAC1 and TSHZ3; the interaction between HDAC1 and APBB1 is mediated by TSHZ3. Interacts (via WWW domain) with NEK6. Interacts (via WWW domain) with ABL1. Interacts with RNF157. Interacts with ARF6. Post-translationally, polyubiquitination by RNF157 leads to degradation by the proteasome. Phosphorylation at Ser-611 by SGK1 promotes its localization to the nucleus. Phosphorylated following nuclear translocation. Phosphorylation at Tyr-547 by ABL1 enhances transcriptional activation activity and reduces the affinity for RASD1/DEXRAS1. Phosphorylated at Ser-460 by PKC upon insulin activation. In terms of processing, acetylation at Lys-205 and Lys-702 by KAT5 promotes its transcription activator activity. Brain, not in liver, very low in other tissues. The long (neuron-specific) form is expressed only in brain.

The protein resides in the cell membrane. Its subcellular location is the cytoplasm. It localises to the nucleus. It is found in the cell projection. The protein localises to the growth cone. The protein resides in the nucleus speckle. Functionally, transcription coregulator that can have both coactivator and corepressor functions. Adapter protein that forms a transcriptionally active complex with the gamma-secretase-derived amyloid precursor protein (APP) intracellular domain. Plays a central role in the response to DNA damage by translocating to the nucleus and inducing apoptosis. May act by specifically recognizing and binding histone H2AX phosphorylated on 'Tyr-142' (H2AXY142ph) at double-strand breaks (DSBs), recruiting other pro-apoptosis factors such as MAPK8/JNK1. Required for histone H4 acetylation at double-strand breaks (DSBs). Its ability to specifically bind modified histones and chromatin modifying enzymes such as KAT5/TIP60, probably explains its transcription activation activity. Functions in association with TSHZ3, SET and HDAC factors as a transcriptional repressor, that inhibits the expression of CASP4. Associates with chromatin in a region surrounding the CASP4 transcriptional start site(s). Involved in hippocampal neurite branching and neuromuscular junction formation, as a result plays a role in spatial memory functioning. Plays a role in the maintenance of lens transparency. May play a role in muscle cell strength. Acts as a molecular adapter that functions in neurite outgrowth by activating the RAC1-ARF6 axis upon insulin treatment. In Rattus norvegicus (Rat), this protein is Amyloid beta precursor protein binding family B member 1.